We begin with the raw amino-acid sequence, 260 residues long: Indole-3-glycerol phosphate synthase (260 aa).

The protein belongs to the TrpC family.

The catalysed reaction is 1-(2-carboxyphenylamino)-1-deoxy-D-ribulose 5-phosphate + H(+) = (1S,2R)-1-C-(indol-3-yl)glycerol 3-phosphate + CO2 + H2O. The protein operates within amino-acid biosynthesis; L-tryptophan biosynthesis; L-tryptophan from chorismate: step 4/5. This Lactiplantibacillus plantarum (strain ATCC BAA-793 / NCIMB 8826 / WCFS1) (Lactobacillus plantarum) protein is Indole-3-glycerol phosphate synthase.